Reading from the N-terminus, the 85-residue chain is Large ribosomal subunit protein bL31B (85 aa).

The protein belongs to the bacterial ribosomal protein bL31 family. Type B subfamily. As to quaternary structure, part of the 50S ribosomal subunit.

This chain is Large ribosomal subunit protein bL31B, found in Staphylococcus epidermidis (strain ATCC 35984 / DSM 28319 / BCRC 17069 / CCUG 31568 / BM 3577 / RP62A).